Here is a 673-residue protein sequence, read N- to C-terminus: DNA ligase (673 aa).

Residues Asp33–Asp37, Ser82–Leu83, and Glu117 contribute to the NAD(+) site. The N6-AMP-lysine intermediate role is filled by Lys119. Positions 140, 177, 295, and 319 each coordinate NAD(+). Residues Cys413, Cys416, Cys431, and Cys436 each contribute to the Zn(2+) site. The region spanning Ala595–Lys673 is the BRCT domain.

It belongs to the NAD-dependent DNA ligase family. LigA subfamily. Requires Mg(2+) as cofactor. The cofactor is Mn(2+).

It carries out the reaction NAD(+) + (deoxyribonucleotide)n-3'-hydroxyl + 5'-phospho-(deoxyribonucleotide)m = (deoxyribonucleotide)n+m + AMP + beta-nicotinamide D-nucleotide.. In terms of biological role, DNA ligase that catalyzes the formation of phosphodiester linkages between 5'-phosphoryl and 3'-hydroxyl groups in double-stranded DNA using NAD as a coenzyme and as the energy source for the reaction. It is essential for DNA replication and repair of damaged DNA. The polypeptide is DNA ligase (Synechococcus sp. (strain JA-3-3Ab) (Cyanobacteria bacterium Yellowstone A-Prime)).